A 342-amino-acid chain; its full sequence is Lipase B (342 aa).

Positions 1-18 (MKLLSLTGVAGVLATCVA) are cleaved as a signal peptide. A propeptide spanning residues 19-25 (ATPLVKR) is cleaved from the precursor. Cysteines 47 and 89 form a disulfide. N-linked (GlcNAc...) asparagine glycosylation is present at Asn-99. Residues Ser-130, Asp-212, and His-249 contribute to the active site. 2 disulfides stabilise this stretch: Cys-241-Cys-283 and Cys-318-Cys-336.

The enzyme catalyses a triacylglycerol + H2O = a diacylglycerol + a fatty acid + H(+). Functionally, hydrolysis of triglycerides. Is very stereospecific both in hydrolysis and in organic synthesis and has a potentially important application in glucolipid synthesis. The protein is Lipase B of Pseudozyma antarctica (Yeast).